The chain runs to 395 residues: Argininosuccinate synthase (395 aa).

Residue 8 to 16 participates in ATP binding; sequence AYSGGLDTS. Residues Tyr86 and Ser91 each contribute to the L-citrulline site. An ATP-binding site is contributed by Gly116. 3 residues coordinate L-aspartate: Thr118, Asn122, and Asp123. An L-citrulline-binding site is contributed by Asn122. Residues Arg126, Ser172, Ser181, Glu257, and Tyr269 each coordinate L-citrulline.

This sequence belongs to the argininosuccinate synthase family. Type 1 subfamily. In terms of assembly, homotetramer.

It localises to the cytoplasm. It carries out the reaction L-citrulline + L-aspartate + ATP = 2-(N(omega)-L-arginino)succinate + AMP + diphosphate + H(+). Its pathway is amino-acid biosynthesis; L-arginine biosynthesis; L-arginine from L-ornithine and carbamoyl phosphate: step 2/3. The chain is Argininosuccinate synthase from Methanosarcina barkeri (strain Fusaro / DSM 804).